A 273-amino-acid chain; its full sequence is Cytochrome b-c1 complex subunit Rieske, mitochondrial (273 aa).

A mitochondrion-targeting transit peptide spans 1–61; sequence MLRVAGRRLS…PFFVASRGFS (61 aa). Positions 25 to 46 are disordered; sequence PLAGAGVPDRDDDSARGRSQPR. Over 62–110 the chain is Mitochondrial matrix; that stretch reads STETVVPRNQDAGLADLPATVAAVKNPNPKVVYDEYNHERYPPGDPSKR. Residues 111 to 133 traverse the membrane as a helical segment; sequence AFAYFVLSGGRFIYASLLRLLVL. Over 134-273 the chain is Mitochondrial intermembrane; that stretch reads KFVLSMSASK…FLEENKLLVG (140 aa). The region spanning 176–271 is the Rieske domain; the sequence is RRRTEDDIKL…YSFLEENKLL (96 aa). 4 residues coordinate [2Fe-2S] cluster: Cys-216, His-218, Cys-235, and His-238. An intrachain disulfide couples Cys-221 to Cys-237.

Belongs to the Rieske iron-sulfur protein family. Component of the ubiquinol-cytochrome c oxidoreductase (cytochrome b-c1 complex, complex III, CIII), a multisubunit enzyme composed of 3 respiratory subunits cytochrome b, cytochrome c1 and Rieske protein, 2 core protein subunits, and several low-molecular weight protein subunits. The complex exists as an obligatory dimer and forms supercomplexes (SCs) in the inner mitochondrial membrane with cytochrome c oxidase (complex IV, CIV). The cofactor is [2Fe-2S] cluster.

The protein localises to the mitochondrion inner membrane. It catalyses the reaction a quinol + 2 Fe(III)-[cytochrome c](out) = a quinone + 2 Fe(II)-[cytochrome c](out) + 2 H(+)(out). In terms of biological role, component of the ubiquinol-cytochrome c oxidoreductase, a multisubunit transmembrane complex that is part of the mitochondrial electron transport chain which drives oxidative phosphorylation. The respiratory chain contains 3 multisubunit complexes succinate dehydrogenase (complex II, CII), ubiquinol-cytochrome c oxidoreductase (cytochrome b-c1 complex, complex III, CIII) and cytochrome c oxidase (complex IV, CIV), that cooperate to transfer electrons derived from NADH and succinate to molecular oxygen, creating an electrochemical gradient over the inner membrane that drives transmembrane transport and the ATP synthase. The cytochrome b-c1 complex catalyzes electron transfer from ubiquinol to cytochrome c, linking this redox reaction to translocation of protons across the mitochondrial inner membrane, with protons being carried across the membrane as hydrogens on the quinol. In the process called Q cycle, 2 protons are consumed from the matrix, 4 protons are released into the intermembrane space and 2 electrons are passed to cytochrome c. The Rieske protein is a catalytic core subunit containing a [2Fe-2S] iron-sulfur cluster. It cycles between 2 conformational states during catalysis to transfer electrons from the quinol bound in the Q(0) site in cytochrome b to cytochrome c1. This Zea mays (Maize) protein is Cytochrome b-c1 complex subunit Rieske, mitochondrial.